We begin with the raw amino-acid sequence, 452 residues long: MASVPRGENWTDGTVEVGTHTGNLSSALGVTEWLALQAGNFSSALGLPATTQAPSQVRANLTNQFVQPSWRIALWSLAYGLVVAVAVFGNLIVIWIILAHKRMRTVTNYFLVNLAFSDASVAAFNTLINFIYGLHSEWYFGANYCRFQNFFPITAVFASIYSMTAIAVDRYMAIIDPLKPRLSATATKIVIGSIWILAFLLAFPQCLYSKIKVMPGRTLCYVQWPEGPKQHFTYHIIVIILVYCFPLLIMGVTYTIVGITLWGGEIPGDTCDKYHEQLKAKRKVVKMMIIVVVTFAICWLPYHVYFILTAIYQQLNRWKYIQQVYLASFWLAMSSTMYNPIIYCCLNKRFRAGFKRAFRWCPFIQVSSYDELELKTTRFHPTRQSSLYTVSRMESVTVLFDPNDGDPTKSSRKKRAVPRDPSANGCSHRGSKSASTTSSFISSPYTSVDEYS.

Residues 1 to 71 (MASVPRGENW…TNQFVQPSWR (71 aa)) are Extracellular-facing. Asn-9, Asn-23, Asn-40, and Asn-60 each carry an N-linked (GlcNAc...) asparagine glycan. Residues 72–94 (IALWSLAYGLVVAVAVFGNLIVI) form a helical membrane-spanning segment. Residues 95–104 (WIILAHKRMR) lie on the Cytoplasmic side of the membrane. A helical membrane pass occupies residues 105–126 (TVTNYFLVNLAFSDASVAAFNT). At 127-146 (LINFIYGLHSEWYFGANYCR) the chain is on the extracellular side. An intrachain disulfide couples Cys-145 to Cys-220. A helical membrane pass occupies residues 147–168 (FQNFFPITAVFASIYSMTAIAV). The Cytoplasmic portion of the chain corresponds to 169-188 (DRYMAIIDPLKPRLSATATK). The chain crosses the membrane as a helical span at residues 189–209 (IVIGSIWILAFLLAFPQCLYS). The Extracellular segment spans residues 210–232 (KIKVMPGRTLCYVQWPEGPKQHF). Residues 233 to 257 (TYHIIVIILVYCFPLLIMGVTYTIV) form a helical membrane-spanning segment. At 258–286 (GITLWGGEIPGDTCDKYHEQLKAKRKVVK) the chain is on the cytoplasmic side. A helical membrane pass occupies residues 287–308 (MMIIVVVTFAICWLPYHVYFIL). The Extracellular portion of the chain corresponds to 309-321 (TAIYQQLNRWKYI). Residues 322–346 (QQVYLASFWLAMSSTMYNPIIYCCL) traverse the membrane as a helical segment. Residues 347-452 (NKRFRAGFKR…SPYTSVDEYS (106 aa)) are Cytoplasmic-facing. Cys-361 is lipidated: S-palmitoyl cysteine. The tract at residues 400-452 (FDPNDGDPTKSSRKKRAVPRDPSANGCSHRGSKSASTTSSFISSPYTSVDEYS) is disordered. Low complexity predominate over residues 432-452 (KSASTTSSFISSPYTSVDEYS).

This sequence belongs to the G-protein coupled receptor 1 family. Post-translationally, the anchoring of this receptor to the plasma membrane is probably mediated by the palmitoylation of a cysteine residue.

It is found in the cell membrane. This is a receptor for the tachykinin neuropeptide neuromedin-K (neurokinin B). It is associated with G proteins that activate a phosphatidylinositol-calcium second messenger system. The rank order of affinity of this receptor to tachykinins is: neuromedin-K &gt; substance K &gt; substance P. The protein is Neuromedin-K receptor (Tacr3) of Rattus norvegicus (Rat).